The sequence spans 226 residues: Orotidine 5'-phosphate decarboxylase (226 aa).

Substrate is bound by residues Asp-8, Lys-30, 58–67 (DLKLYDIPNT), Thr-117, Arg-177, Gln-186, Gly-206, and Arg-207. Lys-60 (proton donor) is an active-site residue.

It belongs to the OMP decarboxylase family. Type 1 subfamily. In terms of assembly, homodimer.

It catalyses the reaction orotidine 5'-phosphate + H(+) = UMP + CO2. Its pathway is pyrimidine metabolism; UMP biosynthesis via de novo pathway; UMP from orotate: step 2/2. Catalyzes the decarboxylation of orotidine 5'-monophosphate (OMP) to uridine 5'-monophosphate (UMP). The polypeptide is Orotidine 5'-phosphate decarboxylase (Campylobacter concisus (strain 13826)).